The primary structure comprises 227 residues: Cytochrome c oxidase subunit 2 (227 aa).

The Mitochondrial intermembrane segment spans residues 1 to 26; that stretch reads MSTWKNLFLQDSASPLMELLMCFHDH. A helical membrane pass occupies residues 27 to 48; sequence AMLILILITIMVSQMLLSMLFN. At 49 to 62 the chain is on the mitochondrial matrix side; sequence KLSHRYLLEGQLIE. The chain crosses the membrane as a helical span at residues 63-82; it reads TIWTIIPAIILILIALPSLR. Over 83-227 the chain is Mitochondrial intermembrane; it reads LLYILDEINN…LFLNWVISKA (145 aa). Cu cation contacts are provided by H161, C196, E198, C200, H204, and M207. Residue E198 participates in Mg(2+) binding.

This sequence belongs to the cytochrome c oxidase subunit 2 family. Component of the cytochrome c oxidase (complex IV, CIV), a multisubunit enzyme composed of a catalytic core of 3 subunits and several supernumerary subunits. The complex exists as a monomer or a dimer and forms supercomplexes (SCs) in the inner mitochondrial membrane with ubiquinol-cytochrome c oxidoreductase (cytochrome b-c1 complex, complex III, CIII). It depends on Cu cation as a cofactor.

Its subcellular location is the mitochondrion inner membrane. It carries out the reaction 4 Fe(II)-[cytochrome c] + O2 + 8 H(+)(in) = 4 Fe(III)-[cytochrome c] + 2 H2O + 4 H(+)(out). Component of the cytochrome c oxidase, the last enzyme in the mitochondrial electron transport chain which drives oxidative phosphorylation. The respiratory chain contains 3 multisubunit complexes succinate dehydrogenase (complex II, CII), ubiquinol-cytochrome c oxidoreductase (cytochrome b-c1 complex, complex III, CIII) and cytochrome c oxidase (complex IV, CIV), that cooperate to transfer electrons derived from NADH and succinate to molecular oxygen, creating an electrochemical gradient over the inner membrane that drives transmembrane transport and the ATP synthase. Cytochrome c oxidase is the component of the respiratory chain that catalyzes the reduction of oxygen to water. Electrons originating from reduced cytochrome c in the intermembrane space (IMS) are transferred via the dinuclear copper A center (CU(A)) of subunit 2 and heme A of subunit 1 to the active site in subunit 1, a binuclear center (BNC) formed by heme A3 and copper B (CU(B)). The BNC reduces molecular oxygen to 2 water molecules using 4 electrons from cytochrome c in the IMS and 4 protons from the mitochondrial matrix. The sequence is that of Cytochrome c oxidase subunit 2 (COII) from Sitophilus granarius (Granary weevil).